Consider the following 416-residue polypeptide: Enterobactin exporter EntS (416 aa).

At 1-21 the chain is on the cytoplasmic side; that stretch reads MNKQSWLLNLSLLKTHPAFRA. Residues 22-42 traverse the membrane as a helical segment; that stretch reads VFLARFISIVSLGLLGVAVPV. Residues 43-55 lie on the Periplasmic side of the membrane; it reads QIQMMTHSTWQVG. A helical transmembrane segment spans residues 56-76; sequence LSVTLTGGAMFVGLMVGGVLA. At 77 to 83 the chain is on the cytoplasmic side; the sequence is DRYERKK. The helical transmembrane segment at 84 to 104 threads the bilayer; it reads VILLARGTCGIGFIGLCLNAL. Topologically, residues 105–109 are periplasmic; that stretch reads LPEPS. A helical transmembrane segment spans residues 110–130; the sequence is LLAIYLLGLWDGFFASLGVTA. At 131 to 156 the chain is on the cytoplasmic side; it reads LLAATPALVGRENLMQAGAITMLTVR. Residues 157–177 traverse the membrane as a helical segment; that stretch reads LGSVISPMIGGLLLATGGVAW. Residue asparagine 178 is a topological domain, periplasmic. The helical transmembrane segment at 179–199 threads the bilayer; sequence YGLAAAGTFITLLPLLSLPAL. Topologically, residues 200 to 218 are cytoplasmic; that stretch reads PPPPQPREHPLKSLLAGFR. A helical membrane pass occupies residues 219 to 239; it reads FLLASPLVGGIALLGGLLTMA. The Periplasmic segment spans residues 240-256; the sequence is SAVRVLYPALADNWQMS. The chain crosses the membrane as a helical span at residues 257-277; the sequence is AAQIGFLYAAIPLGAAIGALT. The Cytoplasmic segment spans residues 278–287; sequence SGKLAHSARP. The chain crosses the membrane as a helical span at residues 288-307; that stretch reads GLLMLLSTLGSFLAIGLFGL. The Periplasmic portion of the chain corresponds to 308 to 313; it reads MPMWIL. The helical transmembrane segment at 314 to 336 threads the bilayer; the sequence is GVVCLALFGWLSAVSSLLQYTML. Residues 337–356 are Cytoplasmic-facing; sequence QTQTPEAMLGRINGLWTAQN. The helical transmembrane segment at 357 to 377 threads the bilayer; the sequence is VTGDAIGAALLGGLGAMMTPV. Position 378 (alanine 378) is a topological domain, periplasmic. Residues 379-399 traverse the membrane as a helical segment; sequence SASASGFGLLIIGVLLLLVLV. Topologically, residues 400 to 416 are cytoplasmic; the sequence is ELRHFRQTPPQVTASDS.

Belongs to the major facilitator superfamily. EntS (TC 2.A.1.38) family.

It localises to the cell inner membrane. In terms of biological role, component of an export pathway for enterobactin. In Escherichia coli (strain K12 / MC4100 / BW2952), this protein is Enterobactin exporter EntS.